A 585-amino-acid chain; its full sequence is uncharacterized protein (585 aa).

The next 6 helical transmembrane spans lie at Phe18–Ile38, Ala55–Phe75, Phe128–Leu148, Val150–Ala170, Ile238–Leu258, and Val276–Ile296. One can recognise an ABC transmembrane type-1 domain in the interval Phe18–Gln301. Positions Val335–Leu570 constitute an ABC transporter domain. Gly369–Ser376 is an ATP binding site.

It belongs to the ABC transporter superfamily.

It localises to the cell membrane. This is an uncharacterized protein from Bacillus subtilis (strain 168).